A 505-amino-acid polypeptide reads, in one-letter code: MIQGSAPGGLSRLPSNKLTCEICGMVCIGPNVLMVHKRSHTGERPFQCNQCGASFTQKGNLLRHVKLHTDEKPFKCSLCSYACRRRDALMGHIRTHSVGKPYKCNFCSRSYKQRSSLEEHQERCPGFHQGLPSSHLAENAFSKYGTTTERADWEHVIRPGQEPPLLDDSALLPTDVRLGLDPAIETQLEPGFDKLSNQDRFSNNFQAKRKSSTPQKVFGQKRMQLELSDIHYDQATSSLSERLHEVPGPVCAQTLEPSASVFLNTPSPVTRSAGQALEATRRLESESPGLPSDIGSIVRPVYSQSVDNRFQHDSPLSTSRSGLSQQPGRHHPSPGILGGSLGGICGRPAEAVGDSRPVNMPPGRGATSSPSNSCPDSTDTESSHEERSHHRTGSGSSTSRPNGSTGRPHRPEMHQDNGRLNRVSGASDSSSLPTYNVSGSDGEALRTYPCHHCGLLFLDHVMYTLHMGCHGFRDPFECNVCGYRSRDRYEFSSHIIRGEHLPTAE.

4 C2H2-type zinc fingers span residues 18 to 40 (LTCEICGMVCIGPNVLMVHKRSH), 46 to 68 (FQCNQCGASFTQKGNLLRHVKLH), 74 to 96 (FKCSLCSYACRRRDALMGHIRTH), and 102 to 128 (YKCNFCSRSYKQRSSLEEHQERCPGFH). Composition is skewed to polar residues over residues 262–273 (FLNTPSPVTRSA) and 309–327 (RFQHDSPLSTSRSGLSQQP). 2 disordered regions span residues 262 to 296 (FLNTPSPVTRSAGQALEATRRLESESPGLPSDIGS) and 309 to 440 (RFQH…VSGS). Over residues 336-345 (ILGGSLGGIC) the composition is skewed to gly residues. Residues 366-377 (ATSSPSNSCPDS) show a composition bias toward polar residues. Low complexity predominate over residues 393–406 (GSGSSTSRPNGSTG). Residues 409–419 (HRPEMHQDNGR) are compositionally biased toward basic and acidic residues. Over residues 424–439 (SGASDSSSLPTYNVSG) the composition is skewed to polar residues. C2H2-type zinc fingers lie at residues 448–470 (YPCHHCGLLFLDHVMYTLHMGCH) and 476–500 (FECNVCGYRSRDRYEFSSHIIRGEH).

This sequence belongs to the Ikaros C2H2-type zinc-finger protein family. As to quaternary structure, heterodimer and homodimer with other IKAROS family members. As to expression, expression is strongest in the blood, gills and intestine.

It localises to the nucleus. This is Ikaros family zinc finger protein from Myxine glutinosa (Atlantic hagfish).